Here is a 407-residue protein sequence, read N- to C-terminus: Nicotinate phosphoribosyltransferase (407 aa).

His228 is modified (phosphohistidine; by autocatalysis).

The protein belongs to the NAPRTase family. Post-translationally, transiently phosphorylated on a His residue during the reaction cycle. Phosphorylation strongly increases the affinity for substrates and increases the rate of nicotinate D-ribonucleotide production. Dephosphorylation regenerates the low-affinity form of the enzyme, leading to product release.

The enzyme catalyses nicotinate + 5-phospho-alpha-D-ribose 1-diphosphate + ATP + H2O = nicotinate beta-D-ribonucleotide + ADP + phosphate + diphosphate. It functions in the pathway cofactor biosynthesis; NAD(+) biosynthesis; nicotinate D-ribonucleotide from nicotinate: step 1/1. Its activity is regulated as follows. 100-fold more active in the presence of saturating ATP. Its function is as follows. Catalyzes the synthesis of beta-nicotinate D-ribonucleotide from nicotinate and 5-phospho-D-ribose 1-phosphate at the expense of ATP. Functions in the deamidating salvage pathway for production of NAD from nicotinamide. Displays a strict preference for nicotinate over nicotinamide substrate. The protein is Nicotinate phosphoribosyltransferase of Acinetobacter baylyi (strain ATCC 33305 / BD413 / ADP1).